Consider the following 306-residue polypeptide: D-alanine--D-alanine ligase (306 aa).

The ATP-grasp domain maps to 101–303; that stretch reads KQVWQGIGLT…FSQLVVKILE (203 aa). ATP is bound at residue 134-189; that stretch reads VADLGLPLIVKPSLEGSSVGMTKVNEISELRGALEAAFRYDVDLLVEKWLHGPEYT. The Mg(2+) site is built by aspartate 257, glutamate 270, and asparagine 272.

This sequence belongs to the D-alanine--D-alanine ligase family. Mg(2+) serves as cofactor. The cofactor is Mn(2+).

The protein localises to the cytoplasm. It carries out the reaction 2 D-alanine + ATP = D-alanyl-D-alanine + ADP + phosphate + H(+). The protein operates within cell wall biogenesis; peptidoglycan biosynthesis. Functionally, cell wall formation. The polypeptide is D-alanine--D-alanine ligase (Photorhabdus laumondii subsp. laumondii (strain DSM 15139 / CIP 105565 / TT01) (Photorhabdus luminescens subsp. laumondii)).